The following is a 524-amino-acid chain: Metalloendopeptidase OMA1, mitochondrial (524 aa).

A mitochondrion-targeting transit peptide spans 1–13; the sequence is MSFICGLQSAARN. A propeptide spanning residues 14 to 143 is cleaved from the precursor; that stretch reads HVFFRFNSLS…RNFHTSPRFQ (130 aa). Residues 144-195 are Mitochondrial matrix-facing; that stretch reads AAPVPLLLMILKPVQKLFAIIVGRGIRKWWQALPPNKKEVVKENIRKNKWKL. A cardiolipin-binding region spans residues 148-167; the sequence is PLLLMILKPVQKLFAIIVGR. The stress-sensor region stretch occupies residues 165 to 195; it reads VGRGIRKWWQALPPNKKEVVKENIRKNKWKL. Residues 196-216 form a helical membrane-spanning segment; the sequence is FLGLSSFGLLFVVFYFTHLEV. H327 provides a ligand contact to Zn(2+). E328 is an active-site residue. The Zn(2+) site is built by H331 and E392. An intrachain disulfide couples C407 to C465.

Belongs to the peptidase M48 family. Homooligomer. The cofactor is Zn(2+). In terms of processing, may form a redox-dependent disulfide bond. Exists in a semi-oxidized state and is activated by prolonged hypoxia. Post-translationally, autocatalytically cleaved in response to mitochondrial depolarization both at the N-terminus and C-terminus to generate the short active form (S-OMA1). Autocatalytic processing at the C-terminus takes place at residues 447-456. The S-OMA1 form is unstable. OMA1 pre-processing by AFG3L2 may participate in maturation before OMA1 autocatalytic cleavage. Degraded by YMEL1 in response to membrane depolarization. Protein turnover is regulated by prohibitin (PHB and PHB2), which promotes degradation of OMA1 in a cardiolipin-binding manner. In terms of tissue distribution, widely expressed, with strong expression in the heart, skeletal muscle, kidney and liver.

It is found in the mitochondrion inner membrane. Protease activity is activated upon autocatalytic cleavage in response to mitochondrial depolarization. Its function is as follows. Metalloprotease that is part of the quality control system in the inner membrane of mitochondria. Activated in response to various mitochondrial stress, leading to the proteolytic cleavage of target proteins, such as OPA1, UQCC3 and DELE1. Involved in the fusion of the mitochondrial inner membranes by mediating cleavage of OPA1 at S1 position, generating the soluble OPA1 (S-OPA1), which cooperates with the membrane form (L-OPA1) to coordinate the fusion of mitochondrial inner membranes. Following stress conditions that induce loss of mitochondrial membrane potential, mediates cleavage of OPA1, leading to excess production of soluble OPA1 (S-OPA1) and negative regulation of mitochondrial fusion. Involved in mitochondrial safeguard in response to transient mitochondrial membrane depolarization (flickering) by catalyzing cleavage of OPA1, leading to excess production of S-OPA1, preventing mitochondrial hyperfusion. Also acts as a regulator of apoptosis: upon BAK and BAX aggregation, mediates cleavage of OPA1, leading to the remodeling of mitochondrial cristae and allowing the release of cytochrome c from mitochondrial cristae. In depolarized mitochondria, may also act as a backup protease for PINK1 by mediating PINK1 cleavage and promoting its subsequent degradation by the proteasome. May also cleave UQCC3 in response to mitochondrial depolarization. Also acts as an activator of the integrated stress response (ISR): in response to mitochondrial stress, mediates cleavage of DELE1 to generate the processed form of DELE1 (S-DELE1), which translocates to the cytosol and activates EIF2AK1/HRI to trigger the ISR. Its role in mitochondrial quality control is essential for regulating lipid metabolism as well as to maintain body temperature and energy expenditure under cold-stress conditions. Binds cardiolipin, possibly regulating its protein turnover. Required for the stability of the respiratory supercomplexes. The protein is Metalloendopeptidase OMA1, mitochondrial of Homo sapiens (Human).